The following is a 339-amino-acid chain: Uridylate kinase PUMPKIN, chloroplastic (339 aa).

A chloroplast-targeting transit peptide spans 1–53 (MAIPLPLTSCSPISTSSSISRTSFVPLTLRNRTFFSNQNYSRRVLISCSSSLS). Low complexity predominate over residues 52–79 (LSSDNGSSPDSMNGNGNGNGSSLNGQSS). A disordered region spans residues 52-89 (LSSDNGSSPDSMNGNGNGNGSSLNGQSSFPRLPSFDGT). 102-105 (KVSG) serves as a coordination point for ATP. The involved in allosteric activation by GTP stretch occupies residues 110–115 (GDEEQN). A UMP-binding site is contributed by Gly144. ATP is bound by residues Gly145 and Arg149. Residue Asp165 participates in UMP binding. ATP-binding positions include 180–184 (QATME) and 189–191 (PTR). 226 to 233 (TGNPFFTT) contributes to the UMP binding site. 3 residues coordinate ATP: Thr253, Phe259, and Asp262.

The protein belongs to the UMP kinase family. Homomultimer. Homohexamer. Forms RNA-containing megadalton-sized complexes. Expressed exclusively in leaves, but not in roots.

It is found in the plastid. It localises to the chloroplast stroma. It catalyses the reaction UMP + ATP = UDP + ADP. The protein operates within pyrimidine metabolism; CTP biosynthesis via de novo pathway; UDP from UMP (UMPK route): step 1/1. Functionally, catalyzes the reversible phosphorylation of UMP to UDP. Required for specific post-transcriptional processes of many plastid transcripts (e.g. PSI (PsaA, PsaF), PSII (D1, CP43, CP47), Cytochrome b(6)f (Cytb(6)), ATP synthase (AtpC), LHCs (LHCa3, LHCb2), and NDH (NdhH)), thus being essential for retaining photosynthetic activity in chloroplasts. Associates with group II introns of the plastid transcripts trnG-UCC, trnV-UAC, petB, petD and ndhA to stabilize corresponding precursor RNAs. The polypeptide is Uridylate kinase PUMPKIN, chloroplastic (Arabidopsis thaliana (Mouse-ear cress)).